A 431-amino-acid chain; its full sequence is Ubiquitin-like modifier-activating enzyme 5 (431 aa).

ATP-binding residues include Gly-92, Asp-113, Lys-136, Asn-159, and Asn-197. 2 residues coordinate Zn(2+): Cys-239 and Cys-242. The Glycyl thioester intermediate role is filled by Cys-263. Residues Cys-316 and Cys-321 each contribute to the Zn(2+) site. The segment at 339–396 (AKAKMEADASTTIDEGPLHDDNEWNISVVDDENEKDTTKAASSSDTLPEGLTRELPVA) is disordered.

This sequence belongs to the ubiquitin-activating E1 family. UBA5 subfamily.

Its function is as follows. E1-like enzyme which activates UFM1. This Arabidopsis thaliana (Mouse-ear cress) protein is Ubiquitin-like modifier-activating enzyme 5.